Here is an 81-residue protein sequence, read N- to C-terminus: MKIVIIFFIAMMAVGVYSKDGYLVKKNGCKYDCTPLFGDSNCNGECKAFKASWGSCYWFACYCRGLPDSVPTYPSSKTCSS.

An N-terminal signal peptide occupies residues 1–18 (MKIVIIFFIAMMAVGVYS). The region spanning 19–80 (KDGYLVKKNG…PTYPSSKTCS (62 aa)) is the LCN-type CS-alpha/beta domain. Disulfide bonds link Cys29–Cys79, Cys33–Cys56, Cys42–Cys61, and Cys46–Cys63.

Belongs to the long (4 C-C) scorpion toxin superfamily. Sodium channel inhibitor family. Beta subfamily. As to expression, expressed by the venom gland.

It is found in the secreted. In terms of biological role, binds voltage-independently at site-4 of sodium channels (Nav) and shift the voltage of activation toward more negative potentials thereby affecting sodium channel activation and promoting spontaneous and repetitive firing. The chain is Neurotoxin LmNaTx11.1 from Lychas mucronatus (Chinese swimming scorpion).